The sequence spans 599 residues: Laccase-15 (599 aa).

The first 29 residues, Met1 to Gly29, serve as a signal peptide directing secretion. 2 Plastocyanin-like domains span residues Val46–Gly162 and Arg173–Asn328. N-linked (GlcNAc...) asparagine glycosylation is found at Asn51 and Asn92. Cu cation-binding residues include His96 and His98. N-linked (GlcNAc...) asparagine glycosylation occurs at Asn124. The Cu cation site is built by His141 and His143. 6 N-linked (GlcNAc...) asparagine glycosylation sites follow: Asn193, Asn217, Asn331, Asn355, Asn412, and Asn454. The Plastocyanin-like 3 domain maps to Glu444 to Pro586. The Cu cation site is built by Asn503, His506, His508, His565, Cys566, His567, His571, and Met576.

It belongs to the multicopper oxidase family. Requires Cu cation as cofactor.

Its subcellular location is the secreted. It localises to the extracellular space. The protein resides in the apoplast. It carries out the reaction 4 hydroquinone + O2 = 4 benzosemiquinone + 2 H2O. Its function is as follows. Lignin degradation and detoxification of lignin-derived products. The polypeptide is Laccase-15 (LAC15) (Oryza sativa subsp. japonica (Rice)).